Consider the following 890-residue polypeptide: Translation initiation factor IF-2 (890 aa).

2 disordered regions span residues 31 to 164 (KLAQ…PAEP) and 189 to 266 (FKAP…ESLK). The segment covering 42-54 (SSSEKPSAKEKSV) has biased composition (basic and acidic residues). Over residues 55–72 (KVALAATSTPTASAEQAS) the composition is skewed to low complexity. Acidic residues predominate over residues 114 to 128 (PEPELEVVDEVCDES). 2 stretches are compositionally biased toward basic and acidic residues: residues 149-163 (PQEK…KPAE) and 242-266 (PKRD…ESLK). The region spanning 395–564 (IRSPIVAFMG…ALQAEVLELK (170 aa)) is the tr-type G domain. The G1 stretch occupies residues 404 to 411 (GHVDHGKT). 404 to 411 (GHVDHGKT) contacts GTP. The G2 stretch occupies residues 429–433 (AITQH). The segment at 450–453 (DTPG) is G3. GTP is bound by residues 450 to 454 (DTPGH) and 504 to 507 (NKCD). The G4 stretch occupies residues 504–507 (NKCD). The G5 stretch occupies residues 540–542 (SAK).

The protein belongs to the TRAFAC class translation factor GTPase superfamily. Classic translation factor GTPase family. IF-2 subfamily.

The protein resides in the cytoplasm. Functionally, one of the essential components for the initiation of protein synthesis. Protects formylmethionyl-tRNA from spontaneous hydrolysis and promotes its binding to the 30S ribosomal subunits. Also involved in the hydrolysis of GTP during the formation of the 70S ribosomal complex. In Chlamydia pneumoniae (Chlamydophila pneumoniae), this protein is Translation initiation factor IF-2 (infB).